Consider the following 253-residue polypeptide: Protein C1orf43 homolog (253 aa).

A helical transmembrane segment spans residues 11-31 (VNVVLVMAYGSLVFVLLFIFV).

The protein resides in the membrane. The protein localises to the golgi apparatus. It localises to the mitochondrion. In terms of biological role, general regulator of phagocytosis. Required to uptake Gram negative bacterium by macrophages. The protein is Protein C1orf43 homolog of Mus musculus (Mouse).